The chain runs to 424 residues: Enolase (424 aa).

Gln165 lines the (2R)-2-phosphoglycerate pocket. The active-site Proton donor is the Glu207. 3 residues coordinate Mg(2+): Asp244, Glu283, and Asp310. (2R)-2-phosphoglycerate is bound by residues Lys335, Arg364, Ser365, and Lys386. Catalysis depends on Lys335, which acts as the Proton acceptor.

The protein belongs to the enolase family. Requires Mg(2+) as cofactor.

The protein localises to the cytoplasm. Its subcellular location is the secreted. It is found in the cell surface. The enzyme catalyses (2R)-2-phosphoglycerate = phosphoenolpyruvate + H2O. The protein operates within carbohydrate degradation; glycolysis; pyruvate from D-glyceraldehyde 3-phosphate: step 4/5. In terms of biological role, catalyzes the reversible conversion of 2-phosphoglycerate (2-PG) into phosphoenolpyruvate (PEP). It is essential for the degradation of carbohydrates via glycolysis. The chain is Enolase from Chlamydia trachomatis serovar L2 (strain ATCC VR-902B / DSM 19102 / 434/Bu).